The chain runs to 239 residues: Ribonuclease PH (239 aa).

Residues Arg-86 and 124–126 each bind phosphate; that span reads GTR.

It belongs to the RNase PH family. Homohexameric ring arranged as a trimer of dimers.

The catalysed reaction is tRNA(n+1) + phosphate = tRNA(n) + a ribonucleoside 5'-diphosphate. Functionally, phosphorolytic 3'-5' exoribonuclease that plays an important role in tRNA 3'-end maturation. Removes nucleotide residues following the 3'-CCA terminus of tRNAs; can also add nucleotides to the ends of RNA molecules by using nucleoside diphosphates as substrates, but this may not be physiologically important. Probably plays a role in initiation of 16S rRNA degradation (leading to ribosome degradation) during starvation. The chain is Ribonuclease PH from Azoarcus sp. (strain BH72).